The sequence spans 180 residues: Stathmin-3 (180 aa).

Residues C22 and C24 are each lipidated (S-palmitoyl cysteine). One can recognise an SLD domain in the interval 38–180 (GDMEVKQLDK…NKEQREEMSG (143 aa)). 7 positions are modified to phosphoserine: S50, S60, S65, S68, S72, S73, and S81. Residues 60–74 (SPSDLSPESPVLSSP) show a composition bias toward low complexity. The segment at 60–81 (SPSDLSPESPVLSSPPKRKDAS) is disordered. Positions 75–179 (PKRKDASLEE…RNKEQREEMS (105 aa)) form a coiled coil.

It belongs to the stathmin family. Interacts with STAT3. Interacts with CLU (secreted form); this interaction may act as an important modulator during neuronal differentiation. In terms of processing, N-terminal palmitoylation promotes specific anchoring to the cytosolic leaflet of Golgi membranes and subsequent vesicular trafficking along dendrites and axons. Neuronal Stathmins are substrates for palmitoyltransferases ZDHHC3, ZDHHC7 and ZDHHC15. Neuron specific.

It is found in the golgi apparatus. It localises to the cell projection. The protein resides in the growth cone. Its subcellular location is the axon. The protein localises to the cytoplasm. It is found in the cytosol. Functionally, exhibits microtubule-destabilizing activity, which is antagonized by STAT3. The sequence is that of Stathmin-3 (Stmn3) from Mus musculus (Mouse).